The following is a 937-amino-acid chain: Protocadherin alpha-7 (937 aa).

The first 29 residues, 1 to 29, serve as a signal peptide directing secretion; that stretch reads MVNLRGYNWKSQQLLLFLIIVAAWEAGSG. Over 30–697 the chain is Extracellular; sequence QLHYSVPEEA…RVDQRLVDVN (668 aa). Cadherin domains follow at residues 34-133, 157-242, 243-350, 351-455, 456-565, and 587-682; these read SVPE…PPMF, ASDA…APVF, DRSL…APQL, TVSS…APLF, AQPE…APTL, and PGQV…SSKV. An intrachain disulfide couples Cys96 to Cys102. Residues Thr223 and Thr225 are each glycosylated (O-linked (Man) threonine). Asn257 and Asn265 each carry an N-linked (GlcNAc...) asparagine glycan. O-linked (Man) threonine glycosylation occurs at Thr438. The O-linked (Man) serine glycan is linked to Ser478. Asn548 carries an N-linked (GlcNAc...) asparagine glycan. A helical membrane pass occupies residues 698 to 718; sequence VYLIIAICAVSSLLVLTLLLY. The Cytoplasmic portion of the chain corresponds to 719-937; that stretch reads TALRCSATPT…GNSTTDNSDQ (219 aa). Disordered regions lie at residues 755-794 and 816-843; these read RQRVCSGEGPPKTDLMAFSPSLPQGPSSTDNPRQPNPDWR and RAGPGGPDQQWPTVSSATPEPEAGEVSP. 5 PXXP repeats span residues 774–777, 786–789, 819–822, 860–863, and 878–881; these read PSLP, PRQP, PGGP, PGNP, and PGSP. The tract at residues 774-881 is 5 X 4 AA repeats of P-X-X-P; the sequence is PSLPQGPSST…PDKFIIPGSP (108 aa). The span at 775–787 shows a compositional bias: polar residues; that stretch reads SLPQGPSSTDNPR. A disordered region spans residues 887–937; that stretch reads RQEPANNQIDKSDFITFGKKEETKKKKKKKKGNKTQEKKEKGNSTTDNSDQ. Basic and acidic residues predominate over residues 896–910; that stretch reads DKSDFITFGKKEETK.

In terms of assembly, forms homodimers in trans (molecules expressed by two different cells). Forms promiscuous heterodimers in cis (at the plasma membrane of the same cell) with other protocadherins.

The protein resides in the cell membrane. Its function is as follows. Calcium-dependent cell-adhesion protein involved in cells self-recognition and non-self discrimination. Thereby, it is involved in the establishment and maintenance of specific neuronal connections in the brain. The sequence is that of Protocadherin alpha-7 from Mus musculus (Mouse).